Here is a 281-residue protein sequence, read N- to C-terminus: Bifunctional protein FolD (281 aa).

Residues 164-166, Ile189, and Ile230 contribute to the NADP(+) site; that span reads GAS.

The protein belongs to the tetrahydrofolate dehydrogenase/cyclohydrolase family. Homodimer.

It catalyses the reaction (6R)-5,10-methylene-5,6,7,8-tetrahydrofolate + NADP(+) = (6R)-5,10-methenyltetrahydrofolate + NADPH. The enzyme catalyses (6R)-5,10-methenyltetrahydrofolate + H2O = (6R)-10-formyltetrahydrofolate + H(+). It functions in the pathway one-carbon metabolism; tetrahydrofolate interconversion. In terms of biological role, catalyzes the oxidation of 5,10-methylenetetrahydrofolate to 5,10-methenyltetrahydrofolate and then the hydrolysis of 5,10-methenyltetrahydrofolate to 10-formyltetrahydrofolate. The polypeptide is Bifunctional protein FolD (Sulfurovum sp. (strain NBC37-1)).